The chain runs to 147 residues: Hemoglobin subunit epsilon-1 (147 aa).

The 145-residue stretch at 3–147 (HFTAEEKAAI…VATALAHKYH (145 aa)) folds into the Globin domain. Heme b-binding residues include His-64 and His-93.

This sequence belongs to the globin family. As to quaternary structure, heterotetramer of two epsilon chains and two alpha chains. As to expression, red blood cells.

Its function is as follows. Beta-type chain found in early embryos. This chain is Hemoglobin subunit epsilon-1 (HBE1), found in Capra hircus (Goat).